Reading from the N-terminus, the 613-residue chain is Zinc metalloproteinase-disintegrin-like MTP4 (613 aa).

The N-terminal stretch at 1 to 20 (MIEVLLVTICFTVFPYQGSS) is a signal peptide. Positions 21 to 191 (IILESGNVND…DEPIEKISQL (171 aa)) are excised as a propeptide. One can recognise a Peptidase M12B domain in the interval 205–401 (KYIELYVVVD…VRPQCILNKP (197 aa)). Glu-208 is a Ca(2+) binding site. Asn-282 carries an N-linked (GlcNAc...) asparagine glycan. Asp-292 contacts Ca(2+). 3 disulfides stabilise this stretch: Cys-316–Cys-396, Cys-356–Cys-380, and Cys-358–Cys-363. Residues His-341, His-345, and His-351 each coordinate Zn(2+). Residues Cys-396, Asn-399, Asn-414, Phe-416, Glu-418, Glu-421, and Asp-424 each coordinate Ca(2+). Residues 409–495 (PPVCGNYFVE…KCPTDSFQRN (87 aa)) enclose the Disintegrin domain. 15 disulfide bridges follow: Cys-412–Cys-441, Cys-423–Cys-436, Cys-425–Cys-431, Cys-435–Cys-458, Cys-449–Cys-455, Cys-454–Cys-480, Cys-467–Cys-487, Cys-474–Cys-506, Cys-499–Cys-511, Cys-518–Cys-568, Cys-533–Cys-575, Cys-543–Cys-577, Cys-546–Cys-556, Cys-563–Cys-601, and Cys-595–Cys-606. Asn-437 carries N-linked (GlcNAc...) asparagine glycosylation. The short motif at 473–475 (DCD) is the D/ECD-tripeptide element. Ca(2+)-binding residues include Asp-475, Leu-476, Glu-478, and Asp-490. Residues 561–574 (KMCGKLLCEKGNAT) form a hypervariable region that may play important roles toward cell migration region. A glycan (N-linked (GlcNAc...) asparagine) is linked at Asn-572.

It belongs to the venom metalloproteinase (M12B) family. P-III subfamily. Monomer. Zn(2+) serves as cofactor. In terms of tissue distribution, expressed by the venom gland.

It localises to the secreted. Snake venom zinc metalloproteinase that may impair hemostasis in the prey. The polypeptide is Zinc metalloproteinase-disintegrin-like MTP4 (Drysdalia coronoides (White-lipped snake)).